The primary structure comprises 422 residues: Putidaredoxin reductase CamA (422 aa).

Residues Ala15, Asp37, Lys50, Val83, and Arg134 each contribute to the FAD site. 156–165 provides a ligand contact to NAD(+); sequence GGGYIGLEVA. FAD is bound by residues Asp284 and Val302.

The protein belongs to the FAD-dependent oxidoreductase family. In terms of assembly, homodimer or monomer. Requires FAD as cofactor.

It catalyses the reaction 2 reduced [2Fe-2S]-[putidaredoxin] + NAD(+) + H(+) = 2 oxidized [2Fe-2S]-[putidaredoxin] + NADH. Its pathway is terpene metabolism; (R)-camphor degradation. Functionally, the oxidation of camphor by cytochrome P450-CAM CamC requires the participation of the flavoprotein, putidaredoxin reductase CamA, and the iron-sulfur protein, putidaredoxin CamB, to mediate the transfer of electrons from NADH to P450 for oxygen activation. In Pseudomonas putida (Arthrobacter siderocapsulatus), this protein is Putidaredoxin reductase CamA.